The primary structure comprises 267 residues: DCN1-like protein 2 (267 aa).

A disordered region spans residues Met-1–Thr-48. Residues Lys-8 to Ala-21 are compositionally biased toward low complexity. The region spanning His-75–Gln-262 is the DCUN1 domain.

The chain is DCN1-like protein 2 from Dictyostelium discoideum (Social amoeba).